The sequence spans 185 residues: Large ribosomal subunit protein uL5 (185 aa).

Belongs to the universal ribosomal protein uL5 family. In terms of assembly, part of the 50S ribosomal subunit; part of the 5S rRNA/L5/L18/L25 subcomplex. Contacts the 5S rRNA and the P site tRNA. Forms a bridge to the 30S subunit in the 70S ribosome.

Its function is as follows. This is one of the proteins that bind and probably mediate the attachment of the 5S RNA into the large ribosomal subunit, where it forms part of the central protuberance. In the 70S ribosome it contacts protein S13 of the 30S subunit (bridge B1b), connecting the 2 subunits; this bridge is implicated in subunit movement. Contacts the P site tRNA; the 5S rRNA and some of its associated proteins might help stabilize positioning of ribosome-bound tRNAs. In Streptomyces avermitilis (strain ATCC 31267 / DSM 46492 / JCM 5070 / NBRC 14893 / NCIMB 12804 / NRRL 8165 / MA-4680), this protein is Large ribosomal subunit protein uL5.